The following is a 467-amino-acid chain: Zinc finger protein 410 (467 aa).

Disordered stretches follow at residues 84–111 and 187–214; these read PDGE…SLLQ and NAKT…PLPQ. 5 C2H2-type zinc fingers span residues 219–243, 249–273, 279–303, 309–333, and 339–362; these read LKCT…LKTH, FICP…MRTH, FVCP…LRIH, FLCE…LVVH, and HQCQ…RKHH. Zn(2+) contacts are provided by cysteine 221, cysteine 226, histidine 239, histidine 243, cysteine 251, cysteine 256, histidine 269, histidine 273, cysteine 281, cysteine 286, histidine 299, histidine 303, cysteine 311, cysteine 316, histidine 329, histidine 333, cysteine 341, cysteine 344, histidine 357, and histidine 361.

In terms of assembly, interacts with CDKN2A/p14ARF. In terms of processing, O-glycosylated. O-GlcNAcylation may occur in response to increasing glucose levels and affect transcription factor activity. Post-translationally, sumoylated. Sumoylation increases its half-life, possibly by blocking ubiquitin-mediated degradation.

It localises to the nucleus. Its subcellular location is the chromosome. Its function is as follows. Transcription factor that binds to the sequence motif 5'-CATCCCATAATA-3', and is specifically required to silence expression of fetal hemoglobin in adult erythroid cells. Prevents expression of fetal hemoglobin genes HBG1 and HBG2 through CHD4: acts as a direct transcriptional activator of CHD4, a central component of the NuRD complex that represses transcription of fetal hemoglobin genes HBG1 and HBG2 in erythroid cells. May also activate transcription of matrix-remodeling genes such as MMP1 during fibroblast senescence. May activate transcription of the gap junction gene GJC1, perhaps in response to increasing glucose. However, recent studies suggest that ZNF410 is dedicated to regulate expression of a single gene: CHD4. This Bos taurus (Bovine) protein is Zinc finger protein 410.